The sequence spans 386 residues: MISHRNAIANIMQIVTYESTYQSDEPELCLGVLPQSHIYSLVVVSQASIWRGDGVVVLQGFELEQTLLAIQTNGIKRLWLVPPMLVAITKAPRIVESYDLSSVSVAAVGASGISKDVMATFGELLPACKIIQGYGMTETTGVVCFGNVEDSMDGSCGHLYPGYEARLIDGEGKDVESHNTPGELVLRSPSVVIGYYNDESATSEAMMDGGWLRTGDLVEIRQSEKGHEHVFVVDRVKELIKVRGLQVAPAELESHLILHPAVAEVAVIPVPDDRAGELPKAYIVRASGAELDEQVLRKELSQYVEGQFARHKHLDGGIEFLDSLPKTASGKMQRKTLKEKARTDAEARRQAREKAANGVHKVHVNGVKRPEKMEVFDLSSDDEDDD.

The SBD1 stretch occupies residues 62–132 (ELEQTLLAIQ…ELLPACKIIQ (71 aa)). Position 107 to 115 (107 to 115 (AVGASGISK)) interacts with ATP. An SBD2 region spans residues 133-195 (GYGMTETTGV…LRSPSVVIGY (63 aa)). Thr137 contributes to the substrate binding site. ATP is bound by residues Asp216 and Arg235. Residues 243–245 (RGL) and 313–316 (HLDG) each bind CoA. Lys331 lines the ATP pocket. Residues 352–386 (REKAANGVHKVHVNGVKRPEKMEVFDLSSDDEDDD) form a disordered region.

The protein belongs to the ATP-dependent AMP-binding enzyme family.

It participates in secondary metabolite biosynthesis. Functionally, acyl-CoA ligase; part of the gene cluster that mediates the biosynthesis of the lipopeptide antibiotics leucinostatins that show extensive biological activities, including antimalarial, antiviral, antibacterial, antifungal, and antitumor activities, as well as phytotoxic. Leucinostatin A contains nine amino acid residues, including the unusual amino acid 4-methyl-L-proline (MePro), 2-amino-6-hydroxy-4-methyl-8-oxodecanoic acid (AHyMeOA), 3-hydroxyleucine (HyLeu), alpha-aminoisobutyric acid (AIB), beta-Ala, a 4-methylhex-2-enoic acid at the N-terminus as well as a N1,N1-dimethylpropane-1,2-diamine (DPD) at the C-terminus. The biosynthesis of leucinostatins is probably initiated with the assembly of 4-methylhex-2-enoic acid by a reducing PKS. Two reducing polyketide synthases, lcsB and lcsC, have been identified in the cluster and it is not clear which is the one that assembles 4-methylhex-2-enoic acid since both contain KS, AT, DH, cMT, ER, KR and ACP domains. The polyketide residue might be transferred to the NRPS lcsA, mediated by two additional enzymes, the acyl-CoA ligase lcsD and the thioesterase lcsE. The linear polyketide carboxylic acid, which is released from PKS, is converted to a CoA thioester by lcsD, and then lcsE hydrolyzes the thiol bond and shuttles the polyketide intermediate to lcsA. The C domain of the first module catalyzed the condensation of 4-methylhex-2-enoic acid and MePro carried by domain A1, followed by successive condensations of nine amino acids to trigger the elongation of the linear peptide. A5 and A6 domains of lcsA are proposed to incorporate leucine, A2 AHyMeOA, and A3 incorporates HyLeu. A4, A7 and A8 incorporate AIB. The AHyMeOA in leucinostatin A activated by the A2 might be produced by the second PKS (lcsB or lcsC) present within the cluster. The MePro is probably produced via leucine cyclization and may originate from a separate pathway, independent of the cluster. Another nonproteinogenic amino acid, beta-Ala, could be produced by an aspartic acid decarboxylase also localized outside of the cluster. Two candidates are VFPBJ_01400 and VFPBJ_10476. The final peptide scaffold may be released by the NAD(P)H-dependent thioester reductase (TE) at the C-terminal region of lcsA. Transamination of the lcsA product by the transaminase lcsP may produce DPD at the C-terminus. Further hydroxylation steps performed alternatively by the cytochrome P450 monooxygenases lcsI, lcsK and lcsN then yield the non-methylated leucinostatins precursor. It is also possible that leucines can be hydroxylated prior to their incorporation into the peptide. Varying extents of methylation then lead to the formation of leucinostatins A and B. This Purpureocillium lilacinum (Paecilomyces lilacinus) protein is Acyl-CoA ligase lcsD.